Consider the following 379-residue polypeptide: Oxidoreductase chry3 (379 aa).

Disordered stretches follow at residues 1–23 and 126–150; these read MTTATKPHQGRFRYLTRGSQPTP and EGDDSAPAEEEADTQASSSDDTSHM. Over residues 126 to 138 the composition is skewed to acidic residues; that stretch reads EGDDSAPAEEEAD.

Belongs to the asaB hydroxylase/desaturase family.

Its pathway is pigment biosynthesis. In terms of biological role, oxidoreductase; part of the gene cluster that mediates the biosynthesis of the yellow pigment chrysogine. Pyruvic acid and anthranilic acid are likely substrates for the nonribosomal peptide synthetase chry1/NRPS14, with pyruvic acid adenylated by the first A domain and anthranilic acid by the second. If pyruvic acid and anthranilic acid are merged and released from chry1/NRPS14 by hydrolysis, a subsequent amidation would lead to 2-pyruvoylaminobenzamide. This process is probably catalyzed by the amidotransferase chry2 using glutamine as amino donor. The dehydrogenase chry5 that has a terminal berberine bridge domain for C-N cyclization could catalyze the cyclization of 2-pyruvoylaminobenzamide to yield acetyl-4(3H)-quinazolidinone. A final reduction of acetyl-4(3H)-quinazolidinone catalyzed by the oxidoreductase chry4 would result in chrysogine. The sequence is that of Oxidoreductase chry3 from Gibberella zeae (strain ATCC MYA-4620 / CBS 123657 / FGSC 9075 / NRRL 31084 / PH-1) (Wheat head blight fungus).